Here is a 235-residue protein sequence, read N- to C-terminus: U1 small nuclear ribonucleoprotein C (235 aa).

The Matrin-type zinc-finger motif lies at tyrosine 4 to glutamate 36. Positions glutamine 131 to serine 235 are disordered. A compositionally biased stretch (low complexity) spans asparagine 134–asparagine 168. The segment covering methionine 169–glutamate 189 has biased composition (basic and acidic residues). Positions proline 192–asparagine 203 are enriched in low complexity. Basic and acidic residues-rich tracts occupy residues serine 205–lysine 217 and asparagine 225–serine 235.

The protein belongs to the U1 small nuclear ribonucleoprotein C family. As to quaternary structure, U1 snRNP is composed of the 7 core Sm proteins B/B', D1, D2, D3, E, F and G that assemble in a heptameric protein ring on the Sm site of the small nuclear RNA to form the core snRNP, and at least 3 U1 snRNP-specific proteins U1-70K, U1-A and U1-C. U1-C interacts with U1 snRNA and the 5' splice-site region of the pre-mRNA.

Its subcellular location is the nucleus. Its function is as follows. Component of the spliceosomal U1 snRNP, which is essential for recognition of the pre-mRNA 5' splice-site and the subsequent assembly of the spliceosome. U1-C is directly involved in initial 5' splice-site recognition for both constitutive and regulated alternative splicing. The interaction with the 5' splice-site seems to precede base-pairing between the pre-mRNA and the U1 snRNA. Stimulates commitment or early (E) complex formation by stabilizing the base pairing of the 5' end of the U1 snRNA and the 5' splice-site region. The chain is U1 small nuclear ribonucleoprotein C from Plasmodium falciparum (isolate 3D7).